Consider the following 1119-residue polypeptide: Leucine-rich repeats and immunoglobulin-like domains protein 3 (1119 aa).

The first 24 residues, methionine 1–alanine 24, serve as a signal peptide directing secretion. An LRRNT domain is found at proline 38–serine 74. LRR repeat units follow at residues tryptophan 75–histidine 96, serine 99–serine 120, asparagine 122–lysine 142, serine 146–leucine 167, glutamine 168–asparagine 189, threonine 193–leucine 214, glutamine 216–glycine 237, alanine 240–glycine 261, asparagine 264–glycine 285, methionine 288–phenylalanine 309, lysine 312–glycine 333, leucine 336–glycine 357, serine 360–phenylalanine 382, lysine 387–glycine 408, and alanine 411–glutamine 432. Residues asparagine 122 and asparagine 156 are each glycosylated (N-linked (GlcNAc...) asparagine). Asparagine 274 is a glycosylation site (N-linked (GlcNAc...) asparagine). 3 N-linked (GlcNAc...) asparagine glycosylation sites follow: asparagine 442, asparagine 469, and asparagine 515. An LRRCT domain is found at serine 444–aspartate 495. Ig-like C2-type domains lie at proline 499–threonine 598, proline 603–threonine 692, and proline 697–serine 783. 2 disulfides stabilise this stretch: cysteine 520-cysteine 581 and cysteine 624-cysteine 676. Asparagine 688 and asparagine 729 each carry an N-linked (GlcNAc...) asparagine glycan. An intrachain disulfide couples cysteine 718 to cysteine 767. The helical transmembrane segment at valine 810–isoleucine 830 threads the bilayer. 4 N-linked (GlcNAc...) asparagine glycosylation sites follow: asparagine 905, asparagine 987, asparagine 999, and asparagine 1016. Positions serine 1073 to glutamate 1093 are disordered. Residues glutamate 1083–glutamate 1093 show a composition bias toward basic and acidic residues.

Interacts with EGFR, ERBB2 and ERBB4 (in vitro). Widely expressed.

It is found in the cell membrane. Its subcellular location is the cytoplasmic vesicle membrane. Functionally, may play a role in craniofacial and inner ear morphogenesis during embryonic development. May act within the otic vesicle epithelium to control formation of the lateral semicircular canal in the inner ear, possibly by restricting the expression of NTN1. The polypeptide is Leucine-rich repeats and immunoglobulin-like domains protein 3 (LRIG3) (Homo sapiens (Human)).